Here is a 157-residue protein sequence, read N- to C-terminus: 3-dehydroquinate dehydratase (157 aa).

Tyrosine 24 serves as the catalytic Proton acceptor. 3 residues coordinate substrate: asparagine 75, histidine 81, and aspartate 88. Residue histidine 101 is the Proton donor of the active site. Residues 102–103 and arginine 112 each bind substrate; that span reads LS.

The protein belongs to the type-II 3-dehydroquinase family. As to quaternary structure, homododecamer.

The enzyme catalyses 3-dehydroquinate = 3-dehydroshikimate + H2O. The protein operates within metabolic intermediate biosynthesis; chorismate biosynthesis; chorismate from D-erythrose 4-phosphate and phosphoenolpyruvate: step 3/7. Functionally, catalyzes a trans-dehydration via an enolate intermediate. This Brucella melitensis biotype 1 (strain ATCC 23456 / CCUG 17765 / NCTC 10094 / 16M) protein is 3-dehydroquinate dehydratase.